Consider the following 520-residue polypeptide: DNA mismatch repair protein MutL (520 aa).

It belongs to the DNA mismatch repair MutL/HexB family.

In terms of biological role, this protein is involved in the repair of mismatches in DNA. It is required for dam-dependent methyl-directed DNA mismatch repair. May act as a 'molecular matchmaker', a protein that promotes the formation of a stable complex between two or more DNA-binding proteins in an ATP-dependent manner without itself being part of a final effector complex. The protein is DNA mismatch repair protein MutL of Persephonella marina (strain DSM 14350 / EX-H1).